The following is a 765-amino-acid chain: LPS-assembly protein LptD (765 aa).

Positions methionine 1–alanine 18 are cleaved as a signal peptide.

Belongs to the LptD family. Component of the lipopolysaccharide transport and assembly complex. Interacts with LptE and LptA.

The protein localises to the cell outer membrane. Functionally, together with LptE, is involved in the assembly of lipopolysaccharide (LPS) at the surface of the outer membrane. The sequence is that of LPS-assembly protein LptD from Shewanella oneidensis (strain ATCC 700550 / JCM 31522 / CIP 106686 / LMG 19005 / NCIMB 14063 / MR-1).